A 205-amino-acid polypeptide reads, in one-letter code: Small ribosomal subunit protein uS4 (205 aa).

Positions 18-46 (NIWGRPKSPVNRREYGPGQHGQRRKGKLS) are disordered. One can recognise an S4 RNA-binding domain in the interval 94–157 (RRLDTVVYRS…KQLAIVLEAN (64 aa)).

Belongs to the universal ribosomal protein uS4 family. In terms of assembly, part of the 30S ribosomal subunit. Contacts protein S5. The interaction surface between S4 and S5 is involved in control of translational fidelity.

In terms of biological role, one of the primary rRNA binding proteins, it binds directly to 16S rRNA where it nucleates assembly of the body of the 30S subunit. With S5 and S12 plays an important role in translational accuracy. The sequence is that of Small ribosomal subunit protein uS4 from Rhodopseudomonas palustris (strain BisB5).